Consider the following 550-residue polypeptide: Probable acyl-activating enzyme 6 (550 aa).

Belongs to the ATP-dependent AMP-binding enzyme family. Expressed at low levels in roots, leaves, stems and developing seeds.

In terms of biological role, may act as an acid--thiol ligase that activates carboxylic acids by forming acyl-CoAs. The chain is Probable acyl-activating enzyme 6 (AAE6) from Arabidopsis thaliana (Mouse-ear cress).